Consider the following 287-residue polypeptide: SPX domain-containing protein 2 (287 aa).

In terms of domain architecture, SPX spans 1 to 162 (MKFGKSLSNQ…GALIRLPFIQ (162 aa)). Basic and acidic residues predominate over residues 36 to 50 (EPRSVENRPNKRSRS). Disordered regions lie at residues 36 to 61 (EPRSVENRPNKRSRSDSNSVDTDPTV) and 194 to 213 (KSRNLDEEGEPTTSGMVKTG).

It is found in the nucleus. May inhibit PHR1 DNA-binding activity in a Pi-dependent manner. The protein is SPX domain-containing protein 2 of Arabidopsis thaliana (Mouse-ear cress).